Consider the following 271-residue polypeptide: Thiazole synthase (271 aa).

Lys108 acts as the Schiff-base intermediate with DXP in catalysis. 1-deoxy-D-xylulose 5-phosphate is bound by residues Gly169, 195–196, and 217–218; these read AG and NS.

The protein belongs to the ThiG family. In terms of assembly, homotetramer. Forms heterodimers with either ThiH or ThiS.

It is found in the cytoplasm. It catalyses the reaction [ThiS sulfur-carrier protein]-C-terminal-Gly-aminoethanethioate + 2-iminoacetate + 1-deoxy-D-xylulose 5-phosphate = [ThiS sulfur-carrier protein]-C-terminal Gly-Gly + 2-[(2R,5Z)-2-carboxy-4-methylthiazol-5(2H)-ylidene]ethyl phosphate + 2 H2O + H(+). Its pathway is cofactor biosynthesis; thiamine diphosphate biosynthesis. Its function is as follows. Catalyzes the rearrangement of 1-deoxy-D-xylulose 5-phosphate (DXP) to produce the thiazole phosphate moiety of thiamine. Sulfur is provided by the thiocarboxylate moiety of the carrier protein ThiS. In vitro, sulfur can be provided by H(2)S. This chain is Thiazole synthase, found in Prochlorococcus marinus (strain SARG / CCMP1375 / SS120).